Here is a 136-residue protein sequence, read N- to C-terminus: Histone H2B.5 (136 aa).

Basic and acidic residues predominate over residues 1–36 (MAPKAEKKPAAEKKPVETEKKPKAEKRVPGKDGGAD). The interval 1–44 (MAPKAEKKPAAEKKPVETEKKPKAEKRVPGKDGGADKKKKKAKK) is disordered. An N6-acetyllysine mark is found at Lys-7 and Lys-26. Residue Lys-132 forms a Glycyl lysine isopeptide (Lys-Gly) (interchain with G-Cter in ubiquitin) linkage.

It belongs to the histone H2B family. The nucleosome is a histone octamer containing two molecules each of H2A, H2B, H3 and H4 assembled in one H3-H4 heterotetramer and two H2A-H2B heterodimers. The octamer wraps approximately 147 bp of DNA. Can be acetylated to form H2BK6ac and H2BK33ac. In terms of processing, monoubiquitinated to form H2BK143ub1; may give a specific tag for epigenetic transcriptional activation.

It localises to the nucleus. The protein resides in the chromosome. Core component of nucleosome. Nucleosomes wrap and compact DNA into chromatin, limiting DNA accessibility to the cellular machineries which require DNA as a template. Histones thereby play a central role in transcription regulation, DNA repair, DNA replication and chromosomal stability. DNA accessibility is regulated via a complex set of post-translational modifications of histones, also called histone code, and nucleosome remodeling. This is Histone H2B.5 from Triticum aestivum (Wheat).